The following is a 378-amino-acid chain: MDASYFAVQRRALEIVGFDPSTPQLSLKHPIWAGILILSLISHNWPMVVYALQDLSDLTRLTDNFAVFMQGSQSTFKFLVMMAKRRRIGSLIHRLHKLNQAASATPNHLEKIERENQLDRYVARSFRNAAYGVICASAIAPMLLGLWGYVETGVFTPTTPMEFNFWLDERKPHFYWPIYVWGVLGVAAAAWLAIATDTLFSWLTHNVVIQFQLLELVLEEKDLNGGDSRLTGFVSRHRIALDLAKELSSIFGEIVFVKYMLSYLQLCMLAFRFSRSGWSAQVPFRATFLVAIIIQLSSYCYGGEYIKQQSLAIAQAVYGQINWPEMTPKKRRLWQMVIMRAQRPAKIFGFMFVVDLPLLLWVIRTAGSFLAMLRTFER.

Residues 1–30 (MDASYFAVQRRALEIVGFDPSTPQLSLKHP) lie on the Cytoplasmic side of the membrane. A helical transmembrane segment spans residues 31–51 (IWAGILILSLISHNWPMVVYA). The Extracellular portion of the chain corresponds to 52–129 (LQDLSDLTRL…RYVARSFRNA (78 aa)). The chain crosses the membrane as a helical span at residues 130-150 (AYGVICASAIAPMLLGLWGYV). Residues 151–173 (ETGVFTPTTPMEFNFWLDERKPH) are Cytoplasmic-facing. The helical transmembrane segment at 174–194 (FYWPIYVWGVLGVAAAAWLAI) threads the bilayer. Over 195-197 (ATD) the chain is Extracellular. The chain crosses the membrane as a helical span at residues 198–218 (TLFSWLTHNVVIQFQLLELVL). At 219 to 249 (EEKDLNGGDSRLTGFVSRHRIALDLAKELSS) the chain is on the cytoplasmic side. Residues 250–270 (IFGEIVFVKYMLSYLQLCMLA) form a helical membrane-spanning segment. The Extracellular portion of the chain corresponds to 271-285 (FRFSRSGWSAQVPFR). A helical transmembrane segment spans residues 286-306 (ATFLVAIIIQLSSYCYGGEYI). The Cytoplasmic segment spans residues 307–342 (KQQSLAIAQAVYGQINWPEMTPKKRRLWQMVIMRAQ). Residues 343-363 (RPAKIFGFMFVVDLPLLLWVI) traverse the membrane as a helical segment. Topologically, residues 364–378 (RTAGSFLAMLRTFER) are extracellular.

The protein belongs to the insect chemoreceptor superfamily. Heteromeric odorant receptor channel (TC 1.A.69) family. Or1a subfamily. In terms of assembly, interacts with Orco. Complexes exist early in the endomembrane system in olfactory sensory neurons (OSNs), coupling these complexes to the conserved ciliary trafficking pathway.

It localises to the cell membrane. In terms of biological role, odorant receptor which mediates acceptance or avoidance behavior, depending on its substrates. The odorant receptor repertoire encodes a large collection of odor stimuli that vary widely in identity, intensity, and duration. May form a complex with Orco to form odorant-sensing units, providing sensitive and prolonged odorant signaling and calcium permeability. Involved in the behavioral responses to hexanol, pentyl acetate, benzyl acetate, and 2-heptanone. The protein is Odorant receptor 45a (Or45a) of Drosophila melanogaster (Fruit fly).